Consider the following 795-residue polypeptide: Phenylalanine--tRNA ligase beta subunit (795 aa).

The region spanning 39-148 (AGEFTGVKVG…EGTTLGADVR (110 aa)) is the tRNA-binding domain. The B5 domain maps to 401–476 (PKANTVELRR…RIYGYNNIPN (76 aa)). Positions 454, 460, 463, and 464 each coordinate Mg(2+). Residues 701–794 (SKFPANRRDI…IGEKFSATLR (94 aa)) form the FDX-ACB domain.

The protein belongs to the phenylalanyl-tRNA synthetase beta subunit family. Type 1 subfamily. As to quaternary structure, tetramer of two alpha and two beta subunits. The cofactor is Mg(2+).

The protein localises to the cytoplasm. It catalyses the reaction tRNA(Phe) + L-phenylalanine + ATP = L-phenylalanyl-tRNA(Phe) + AMP + diphosphate + H(+). In Aliivibrio fischeri (strain ATCC 700601 / ES114) (Vibrio fischeri), this protein is Phenylalanine--tRNA ligase beta subunit.